Consider the following 309-residue polypeptide: ATP-dependent Clp protease proteolytic subunit 3, chloroplastic (309 aa).

A chloroplast-targeting transit peptide spans 1 to 70 (MEMSLRLASS…WDVSSFSIDS (70 aa)). V71 is subject to N-acetylvaline. S164 functions as the Nucleophile in the catalytic mechanism. Residue H189 is part of the active site. Phosphothreonine is present on T194. The tract at residues 290–309 (DNTNLPSERSMTQNGYAAIE) is disordered. The segment covering 292–309 (TNLPSERSMTQNGYAAIE) has biased composition (polar residues).

The protein belongs to the peptidase S14 family. In terms of assembly, component of the chloroplastic Clp protease core complex which consist of at least 16 proteins: CLPP4 (3 copies), CLPP5 (3 copies), CLPR4 (2 copies), ClpP1 (1 copy), CLPP6 (1 copy), CLPR2 (1 copy), CLPT1 (1 copy), CLPT2 (1 copy) and 3 copies of CLPP3 and/or CLPR1 and/or CLPR3. The core complex is organized in two heptameric rings, one containing CLPP3,4,5,6 in a 1:2:3:1 ratio and the other CLPP1 and CLPR1,2,3,4 in a 3:1:1:1:1 ratio. Interacts with CHIP. Post-translationally, ubiquitinated in vitro by CHIP. Mostly expressed in leaves. Also detected in stems, and to a lower extent, in roots (at protein level).

It is found in the plastid. It localises to the chloroplast stroma. It carries out the reaction Hydrolysis of proteins to small peptides in the presence of ATP and magnesium. alpha-casein is the usual test substrate. In the absence of ATP, only oligopeptides shorter than five residues are hydrolyzed (such as succinyl-Leu-Tyr-|-NHMec, and Leu-Tyr-Leu-|-Tyr-Trp, in which cleavage of the -Tyr-|-Leu- and -Tyr-|-Trp bonds also occurs).. Cleaves peptides in various proteins in a process that requires ATP hydrolysis. Has a chymotrypsin-like activity. Plays a major role in the degradation of misfolded proteins. In the absence of CLPP3, modified ClpPR core(s) could be formed, albeit at strongly reduced levels. The polypeptide is ATP-dependent Clp protease proteolytic subunit 3, chloroplastic (Arabidopsis thaliana (Mouse-ear cress)).